Here is a 120-residue protein sequence, read N- to C-terminus: Large ribosomal subunit protein uL18 (120 aa).

This sequence belongs to the universal ribosomal protein uL18 family. Part of the 50S ribosomal subunit; part of the 5S rRNA/L5/L18/L25 subcomplex. Contacts the 5S and 23S rRNAs.

Its function is as follows. This is one of the proteins that bind and probably mediate the attachment of the 5S RNA into the large ribosomal subunit, where it forms part of the central protuberance. The sequence is that of Large ribosomal subunit protein uL18 from Bacillus cereus (strain G9842).